A 359-amino-acid polypeptide reads, in one-letter code: 4-hydroxy-3-methylbut-2-en-1-yl diphosphate synthase (flavodoxin) (359 aa).

Residues Cys-263, Cys-266, Cys-298, and Glu-305 each coordinate [4Fe-4S] cluster.

This sequence belongs to the IspG family. [4Fe-4S] cluster is required as a cofactor.

It catalyses the reaction (2E)-4-hydroxy-3-methylbut-2-enyl diphosphate + oxidized [flavodoxin] + H2O + 2 H(+) = 2-C-methyl-D-erythritol 2,4-cyclic diphosphate + reduced [flavodoxin]. Its pathway is isoprenoid biosynthesis; isopentenyl diphosphate biosynthesis via DXP pathway; isopentenyl diphosphate from 1-deoxy-D-xylulose 5-phosphate: step 5/6. Converts 2C-methyl-D-erythritol 2,4-cyclodiphosphate (ME-2,4cPP) into 1-hydroxy-2-methyl-2-(E)-butenyl 4-diphosphate. The polypeptide is 4-hydroxy-3-methylbut-2-en-1-yl diphosphate synthase (flavodoxin) (Wolinella succinogenes (strain ATCC 29543 / DSM 1740 / CCUG 13145 / JCM 31913 / LMG 7466 / NCTC 11488 / FDC 602W) (Vibrio succinogenes)).